Here is a 298-residue protein sequence, read N- to C-terminus: Small ribosomal subunit protein uS3 (298 aa).

The 69-residue stretch at 39 to 107 (VREYLKAKLK…PVAVNIEEVR (69 aa)) folds into the KH type-2 domain. Residues 214–298 (PAAVEARTDE…PAAAADGKGE (85 aa)) form a disordered region. Positions 219-245 (ARTDEERRPRGPRRDDRGARPGADRPA) are enriched in basic and acidic residues. Residues 277-298 (KPAVQRVRKVAAPAAAADGKGE) show a composition bias toward low complexity.

Belongs to the universal ribosomal protein uS3 family. In terms of assembly, part of the 30S ribosomal subunit. Forms a tight complex with proteins S10 and S14.

Binds the lower part of the 30S subunit head. Binds mRNA in the 70S ribosome, positioning it for translation. The chain is Small ribosomal subunit protein uS3 from Albidiferax ferrireducens (strain ATCC BAA-621 / DSM 15236 / T118) (Rhodoferax ferrireducens).